Consider the following 394-residue polypeptide: NAD(P)H-quinone oxidoreductase subunit H (394 aa).

Belongs to the complex I 49 kDa subunit family. NDH-1 can be composed of about 15 different subunits; different subcomplexes with different compositions have been identified which probably have different functions.

It localises to the cellular thylakoid membrane. It catalyses the reaction a plastoquinone + NADH + (n+1) H(+)(in) = a plastoquinol + NAD(+) + n H(+)(out). It carries out the reaction a plastoquinone + NADPH + (n+1) H(+)(in) = a plastoquinol + NADP(+) + n H(+)(out). Its function is as follows. NDH-1 shuttles electrons from an unknown electron donor, via FMN and iron-sulfur (Fe-S) centers, to quinones in the respiratory and/or the photosynthetic chain. The immediate electron acceptor for the enzyme in this species is believed to be plastoquinone. Couples the redox reaction to proton translocation, and thus conserves the redox energy in a proton gradient. Cyanobacterial NDH-1 also plays a role in inorganic carbon-concentration. This is NAD(P)H-quinone oxidoreductase subunit H from Synechococcus sp. (strain WH7803).